Here is a 135-residue protein sequence, read N- to C-terminus: Probable histone H2A.2 (135 aa).

Belongs to the histone H2A family. In terms of assembly, the nucleosome is a histone octamer containing two molecules each of H2A, H2B, H3 and H4 assembled in one H3-H4 heterotetramer and two H2A-H2B heterodimers. The octamer wraps approximately 147 bp of DNA.

It is found in the nucleus. Its subcellular location is the chromosome. Functionally, core component of nucleosome. Nucleosomes wrap and compact DNA into chromatin, limiting DNA accessibility to the cellular machineries which require DNA as a template. Histones thereby play a central role in transcription regulation, DNA repair, DNA replication and chromosomal stability. DNA accessibility is regulated via a complex set of post-translational modifications of histones, also called histone code, and nucleosome remodeling. The chain is Probable histone H2A.2 from Oryza sativa subsp. indica (Rice).